Reading from the N-terminus, the 449-residue chain is MSGAPVVRFAPSPTGSLHVGNARAALFNFLFARKNSGKFMLRMDDTDDERSTVEFAAGIEEDLTWLGLRHDLFARQSDRLAAYEAAAAKLKADGRLYPAYETAAELDRKRKRQMARGLPPVYDRAALALTDEDRAKLEAEGRKPHWRFRLDRVHTAFDDLVQGAVEVDGASLSDPVLIREDGRFLYTLPSVVDDIDFAVTHVIRGSDHITNTGVQIQIIRALGAEPPVYAHYSLLNGPEGKPLSKRDDAARFSLRALRDAGFEPMALNSLLARLGTPDAVEPCLSLDELAARFDISRLGRADIRFDPADLAKVNTACLHLMSYEEAKPRLAALGCDLGEAFWEAIKPNLILFSDAADWARVVEGPVEPVIENPDFAAAAAAALPPEPWDESTWALWTDAVKQATGAKGKALFMPLRLALTGLTHGPELKNLLPLIGRERASARLGGLTR.

The short motif at 11 to 21 (PSPTGSLHVGN) is the 'HIGH' region element. Positions 242 to 246 (PLSKR) match the 'KMSKS' region motif. Lys245 contributes to the ATP binding site.

The protein belongs to the class-I aminoacyl-tRNA synthetase family. Glutamate--tRNA ligase type 1 subfamily. In terms of assembly, monomer.

The protein resides in the cytoplasm. It catalyses the reaction tRNA(Glu) + L-glutamate + ATP = L-glutamyl-tRNA(Glu) + AMP + diphosphate. Catalyzes the attachment of glutamate to tRNA(Glu) in a two-step reaction: glutamate is first activated by ATP to form Glu-AMP and then transferred to the acceptor end of tRNA(Glu). The chain is Glutamate--tRNA ligase 1 from Parvibaculum lavamentivorans (strain DS-1 / DSM 13023 / NCIMB 13966).